A 163-amino-acid polypeptide reads, in one-letter code: Probable chemoreceptor glutamine deamidase CheD (163 aa).

Belongs to the CheD family.

It catalyses the reaction L-glutaminyl-[protein] + H2O = L-glutamyl-[protein] + NH4(+). Its function is as follows. Probably deamidates glutamine residues to glutamate on methyl-accepting chemotaxis receptors (MCPs), playing an important role in chemotaxis. This Borrelia garinii subsp. bavariensis (strain ATCC BAA-2496 / DSM 23469 / PBi) (Borreliella bavariensis) protein is Probable chemoreceptor glutamine deamidase CheD.